A 192-amino-acid polypeptide reads, in one-letter code: Large ribosomal subunit protein uL3 (192 aa).

This sequence belongs to the universal ribosomal protein uL3 family. In terms of assembly, part of the 50S ribosomal subunit. Forms a cluster with proteins L14 and L19.

Functionally, one of the primary rRNA binding proteins, it binds directly near the 3'-end of the 23S rRNA, where it nucleates assembly of the 50S subunit. In Wolinella succinogenes (strain ATCC 29543 / DSM 1740 / CCUG 13145 / JCM 31913 / LMG 7466 / NCTC 11488 / FDC 602W) (Vibrio succinogenes), this protein is Large ribosomal subunit protein uL3 (rplC).